Here is a 387-residue protein sequence, read N- to C-terminus: [LysW]-aminoadipate semialdehyde/glutamate semialdehyde transaminase (387 aa).

Residues 96-97 (GT) and Phe-123 contribute to the pyridoxal 5'-phosphate site. Arg-126 is a binding site for substrate. 207–210 (DEIQ) contacts pyridoxal 5'-phosphate. Lys-236 bears the N6-(pyridoxal phosphate)lysine mark. Residue Ser-264 participates in substrate binding. Thr-265 lines the pyridoxal 5'-phosphate pocket.

This sequence belongs to the class-III pyridoxal-phosphate-dependent aminotransferase family. LysJ subfamily. Homodimer. Requires pyridoxal 5'-phosphate as cofactor.

It localises to the cytoplasm. The catalysed reaction is [amino-group carrier protein]-C-terminal-gamma-(L-lysyl)-L-glutamate + 2-oxoglutarate = [amino-group carrier protein]-C-terminal-N-(1-carboxy-5-oxopentan-1-yl)-L-glutamine + L-glutamate. It carries out the reaction [amino-group carrier protein]-C-terminal-gamma-(L-ornithyl)-L-glutamate + 2-oxoglutarate = [amino-group carrier protein]-C-terminal-gamma-(L-glutamyl-5-semialdehyde)-L-glutamate + L-glutamate. It participates in amino-acid biosynthesis; L-lysine biosynthesis via AAA pathway; L-lysine from L-alpha-aminoadipate (Thermus route): step 4/5. The protein operates within amino-acid biosynthesis; L-arginine biosynthesis. Functionally, involved in both the arginine and lysine biosynthetic pathways. The polypeptide is [LysW]-aminoadipate semialdehyde/glutamate semialdehyde transaminase (Sulfolobus acidocaldarius (strain ATCC 33909 / DSM 639 / JCM 8929 / NBRC 15157 / NCIMB 11770)).